The chain runs to 132 residues: Phosphoribosyl-AMP cyclohydrolase (132 aa).

Asp-89 serves as a coordination point for Mg(2+). Zn(2+) is bound at residue Cys-90. Asp-91 and Asp-93 together coordinate Mg(2+). Residues Cys-106 and Cys-113 each contribute to the Zn(2+) site.

This sequence belongs to the PRA-CH family. In terms of assembly, homodimer. Mg(2+) is required as a cofactor. The cofactor is Zn(2+).

It localises to the cytoplasm. The catalysed reaction is 1-(5-phospho-beta-D-ribosyl)-5'-AMP + H2O = 1-(5-phospho-beta-D-ribosyl)-5-[(5-phospho-beta-D-ribosylamino)methylideneamino]imidazole-4-carboxamide. The protein operates within amino-acid biosynthesis; L-histidine biosynthesis; L-histidine from 5-phospho-alpha-D-ribose 1-diphosphate: step 3/9. Functionally, catalyzes the hydrolysis of the adenine ring of phosphoribosyl-AMP. The sequence is that of Phosphoribosyl-AMP cyclohydrolase from Renibacterium salmoninarum (strain ATCC 33209 / DSM 20767 / JCM 11484 / NBRC 15589 / NCIMB 2235).